Reading from the N-terminus, the 116-residue chain is Nitrogenase-stabilizing/protective protein NifW (116 aa).

Belongs to the NifW family. In terms of assembly, homotrimer; associates with NifD.

In terms of biological role, may protect the nitrogenase Fe-Mo protein from oxidative damage. This is Nitrogenase-stabilizing/protective protein NifW from Rhodopseudomonas palustris (strain TIE-1).